The primary structure comprises 677 residues: Methionine--tRNA ligase (677 aa).

The 'HIGH' region motif lies at 15-25 (PYANGSIHLGH). Cys-146, Cys-149, Cys-159, and Cys-162 together coordinate Zn(2+). Residues 333 to 337 (KMSKS) carry the 'KMSKS' region motif. Lys-336 is a binding site for ATP. The tRNA-binding domain maps to 575-677 (DFAKVDLRVA…DGAKPGQQVK (103 aa)).

This sequence belongs to the class-I aminoacyl-tRNA synthetase family. MetG type 1 subfamily. In terms of assembly, homodimer. It depends on Zn(2+) as a cofactor.

The protein resides in the cytoplasm. It catalyses the reaction tRNA(Met) + L-methionine + ATP = L-methionyl-tRNA(Met) + AMP + diphosphate. In terms of biological role, is required not only for elongation of protein synthesis but also for the initiation of all mRNA translation through initiator tRNA(fMet) aminoacylation. This chain is Methionine--tRNA ligase, found in Salmonella arizonae (strain ATCC BAA-731 / CDC346-86 / RSK2980).